The sequence spans 892 residues: Gamma-tubulin small complex component GCP3 (892 aa).

The protein belongs to the TUBGCP family. As to quaternary structure, component of the gamma-tubulin small complex (gamma-TuSC) composed of tubulin gamma chain, gamma-tubulin complex protein 2 (GCP2) and gamma-tubulin complex protein 3 (GCP3). Interacts with tubulin gamma chain.

The protein localises to the cytoplasm. It localises to the cytoskeleton. The protein resides in the flagellum axoneme. It is found in the flagellum basal body. In terms of biological role, component of the gamma-tubulin small complex (gamma-TuSC) involved in microtubule (MT) nucleation for the formation of median bodies and in the biogenesis of flagella. Gamma-TuSC may be required for the correct positioning of EB1 within the trophozoites. The sequence is that of Gamma-tubulin small complex component GCP3 from Giardia intestinalis (strain ATCC 50803 / WB clone C6) (Giardia lamblia).